The sequence spans 617 residues: Electron transfer flavoprotein-ubiquinone oxidoreductase, mitochondrial (617 aa).

The N-terminal 33 residues, 1-33 (MMVPLAKLASPAYQCFHALKIKKNYLPLCATRW), are a transit peptide targeting the mitochondrion. Residue 75–80 (GAGPAG) coordinates FAD. Lys-96 carries the post-translational modification N6-acetyllysine. The stretch at 109–130 (IGAHTLSGACLDPRAFEELFPD) is an intramembrane region. Residues Lys-132 and Lys-223 each carry the N6-acetyllysine modification. Residues Gly-305 and Gly-306 each contribute to the a ubiquinone site. Lys-357 bears the N6-acetyllysine mark. An intramembrane segment occupies 428–447 (IGLHVTEYEDNLKNSWVWKE). Position 551 is a phosphoserine (Ser-551). Residues Cys-561, Cys-586, Cys-589, and Cys-592 each contribute to the [4Fe-4S] cluster site. Residues 577–606 (FRLQINAQNCVHCKTCDIKDPSQNINWVVP) form the 4Fe-4S ferredoxin-type domain.

Monomer. [4Fe-4S] cluster serves as cofactor. It depends on FAD as a cofactor.

Its subcellular location is the mitochondrion inner membrane. It carries out the reaction a ubiquinone + reduced [electron-transfer flavoprotein] = a ubiquinol + oxidized [electron-transfer flavoprotein] + H(+). Its function is as follows. Accepts electrons from ETF and reduces ubiquinone. In Sus scrofa (Pig), this protein is Electron transfer flavoprotein-ubiquinone oxidoreductase, mitochondrial (ETFDH).